We begin with the raw amino-acid sequence, 406 residues long: Nicotinate phosphoribosyltransferase (406 aa).

At H226 the chain carries Phosphohistidine; by autocatalysis.

Belongs to the NAPRTase family. Post-translationally, transiently phosphorylated on a His residue during the reaction cycle. Phosphorylation strongly increases the affinity for substrates and increases the rate of nicotinate D-ribonucleotide production. Dephosphorylation regenerates the low-affinity form of the enzyme, leading to product release.

It catalyses the reaction nicotinate + 5-phospho-alpha-D-ribose 1-diphosphate + ATP + H2O = nicotinate beta-D-ribonucleotide + ADP + phosphate + diphosphate. The protein operates within cofactor biosynthesis; NAD(+) biosynthesis; nicotinate D-ribonucleotide from nicotinate: step 1/1. Functionally, catalyzes the synthesis of beta-nicotinate D-ribonucleotide from nicotinate and 5-phospho-D-ribose 1-phosphate at the expense of ATP. The polypeptide is Nicotinate phosphoribosyltransferase (Verminephrobacter eiseniae (strain EF01-2)).